A 401-amino-acid polypeptide reads, in one-letter code: Tryptophan synthase beta chain (401 aa).

Lys-92 carries the N6-(pyridoxal phosphate)lysine modification.

The protein belongs to the TrpB family. In terms of assembly, tetramer of two alpha and two beta chains. The cofactor is pyridoxal 5'-phosphate.

It catalyses the reaction (1S,2R)-1-C-(indol-3-yl)glycerol 3-phosphate + L-serine = D-glyceraldehyde 3-phosphate + L-tryptophan + H2O. The protein operates within amino-acid biosynthesis; L-tryptophan biosynthesis; L-tryptophan from chorismate: step 5/5. Functionally, the beta subunit is responsible for the synthesis of L-tryptophan from indole and L-serine. In Vesicomyosocius okutanii subsp. Calyptogena okutanii (strain HA), this protein is Tryptophan synthase beta chain.